The following is a 576-amino-acid chain: Arginine--tRNA ligase (576 aa).

A 'HIGH' region motif is present at residues 122-132 (PNVAKQMHVGH).

It belongs to the class-I aminoacyl-tRNA synthetase family. As to quaternary structure, monomer.

It is found in the cytoplasm. It catalyses the reaction tRNA(Arg) + L-arginine + ATP = L-arginyl-tRNA(Arg) + AMP + diphosphate. The sequence is that of Arginine--tRNA ligase from Proteus mirabilis (strain HI4320).